The following is a 501-amino-acid chain: G protein-activated inward rectifier potassium channel 1 (501 aa).

The disordered stretch occupies residues 1 to 40; it reads MSALRRKFGDDYQVVTTSSSGSGLQPQGPGQDPQQQLVPK. Topologically, residues 1–80 are cytoplasmic; the sequence is MSALRRKFGD…LFTTLVDLKW (80 aa). Positions 18-38 are enriched in low complexity; that stretch reads SSSGSGLQPQGPGQDPQQQLV. The helical transmembrane segment at 81-105 threads the bilayer; that stretch reads RWNLFIFILTYTVAWLFMASMWWVI. Residues 106–129 are Extracellular-facing; sequence AYTRGDLNKAHVGNYTPCVANVYN. Residue asparagine 119 is glycosylated (N-linked (GlcNAc...) asparagine). The helical; Pore-forming intramembrane region spans 130-141; the sequence is FPSAFLFFIETE. Residues 142–148 constitute an intramembrane region (pore-forming); that stretch reads ATIGYGY. Residues 143-148 carry the Selectivity filter motif; it reads TIGYGY. The Extracellular portion of the chain corresponds to 149–157; that stretch reads RYITDKCPE. Residues 158–179 form a helical membrane-spanning segment; sequence GIILFLFQSILGSIVDAFLIGC. Residues 180–501 are Cytoplasmic-facing; the sequence is MFIKMSQPKK…LRKMNSDRFT (322 aa). Residues 182-209 are polyphosphoinositide (PIP2)-binding; it reads IKMSQPKKRAETLMFSEHAVISMRDGKL. Phosphoserine is present on residues serine 385 and serine 424.

This sequence belongs to the inward rectifier-type potassium channel (TC 1.A.2.1) family. KCNJ3 subfamily. In terms of assembly, associates with KCNJ5/GIRK4 or KCNJ6/GIRK2 to form a G-protein activated heteromultimer pore-forming unit. The resulting inward current is much larger. Associates with KCNJ9/GIRK3 to form a G-protein activated heteromultimer pore-forming unit.

The protein resides in the membrane. The catalysed reaction is K(+)(in) = K(+)(out). With respect to regulation, heteromultimer composed of KCNJ3/GIRK1 and KCNJ5/GIRK4 is activated by phosphatidylinositol 4,5 biphosphate (PtdIns(4,5)P2). Functionally, inward rectifier potassium channels are characterized by a greater tendency to allow potassium to flow into the cell rather than out of it. Their voltage dependence is regulated by the concentration of extracellular potassium; as external potassium is raised, the voltage range of the channel opening shifts to more positive voltages. The inward rectification is mainly due to the blockage of outward current by internal magnesium. This potassium channel is controlled by G proteins. This receptor plays a crucial role in regulating the heartbeat. The protein is G protein-activated inward rectifier potassium channel 1 (KCNJ3) of Homo sapiens (Human).